A 341-amino-acid polypeptide reads, in one-letter code: MKGLSEGLILGIESSCDETAAAVVAGGRRVLSNTVASQVDLFRKYGGVVPEIASRRHLELILPVIREALQMAGVTLEQIDAVAVTHGPGLVGTLLVGLSAAKALAFGLDKPLIGVNHLQGHIYANFLVEPPPEFPLVCLVVSGGHTDLIYMAGHGRMELLGRTLDDAAGEAFDKVARSVGLGYPGGPQVEKLARSGDPEAVPLPRAHTEGPYDFSFSGLKTAVLQYVQRTGPLNDQQRADLAASFQRAVTSVLVERTVKAAEAKGVRQVILAGGVAANGALREEMRAALEPRGIRLGYPPPVLCTDNAAMIAAAGYYLWRAGVRHDLDLNAVPGLGLGIGG.

Residues H117 and H121 each contribute to the Fe cation site. Substrate-binding positions include 140 to 144 (VVSGG), D173, G186, and N278. D306 is a Fe cation binding site.

Belongs to the KAE1 / TsaD family. Fe(2+) serves as cofactor.

It is found in the cytoplasm. The catalysed reaction is L-threonylcarbamoyladenylate + adenosine(37) in tRNA = N(6)-L-threonylcarbamoyladenosine(37) in tRNA + AMP + H(+). In terms of biological role, required for the formation of a threonylcarbamoyl group on adenosine at position 37 (t(6)A37) in tRNAs that read codons beginning with adenine. Is involved in the transfer of the threonylcarbamoyl moiety of threonylcarbamoyl-AMP (TC-AMP) to the N6 group of A37, together with TsaE and TsaB. TsaD likely plays a direct catalytic role in this reaction. This is tRNA N6-adenosine threonylcarbamoyltransferase from Symbiobacterium thermophilum (strain DSM 24528 / JCM 14929 / IAM 14863 / T).